The following is a 25-amino-acid chain: Small ribosomal subunit protein eS32 (25 aa).

A disordered region spans residues 1 to 25 (MRDKWRKKRVRRLKRKRRKVRARSK).

Belongs to the eukaryotic ribosomal protein eS32 family. As to quaternary structure, component of the small ribosomal subunit. Mature ribosomes consist of a small (40S) and a large (60S) subunit. The 40S subunit contains about 32 different proteins and 1 molecule of RNA (18S). The 60S subunit contains 45 different proteins and 3 molecules of RNA (25S, 5.8S and 5S).

Its subcellular location is the cytoplasm. Its function is as follows. Component of the ribosome, a large ribonucleoprotein complex responsible for the synthesis of proteins in the cell. The small ribosomal subunit (SSU) binds messenger RNAs (mRNAs) and translates the encoded message by selecting cognate aminoacyl-transfer RNA (tRNA) molecules. The large subunit (LSU) contains the ribosomal catalytic site termed the peptidyl transferase center (PTC), which catalyzes the formation of peptide bonds, thereby polymerizing the amino acids delivered by tRNAs into a polypeptide chain. The nascent polypeptides leave the ribosome through a tunnel in the LSU and interact with protein factors that function in enzymatic processing, targeting, and the membrane insertion of nascent chains at the exit of the ribosomal tunnel. In Candida albicans (strain SC5314 / ATCC MYA-2876) (Yeast), this protein is Small ribosomal subunit protein eS32.